We begin with the raw amino-acid sequence, 644 residues long: Macrolide export ATP-binding/permease protein MacB (644 aa).

The ABC transporter domain occupies 4–242; it reads IECKNINRYF…SNVGRIQEKA (239 aa). Residue 40 to 47 coordinates ATP; sequence GQSGSGKS. Helical transmembrane passes span 270-290, 524-544, 574-594, and 607-627; these read LLTMLGIIIGIASVVSVVALG, IALISLVVGGIGVMNIMLVSV, LICVIGGLVGVGLSAAVSLVF, and AMSVIGAVACSTGIGIAFGFM.

This sequence belongs to the ABC transporter superfamily. Macrolide exporter (TC 3.A.1.122) family. In terms of assembly, homodimer.

The protein localises to the cell inner membrane. In terms of biological role, non-canonical ABC transporter that contains transmembrane domains (TMD), which form a pore in the inner membrane, and an ATP-binding domain (NBD), which is responsible for energy generation. Confers resistance against macrolides. The polypeptide is Macrolide export ATP-binding/permease protein MacB (Neisseria meningitidis serogroup A / serotype 4A (strain DSM 15465 / Z2491)).